A 310-amino-acid polypeptide reads, in one-letter code: Ribose-phosphate pyrophosphokinase (310 aa).

ATP is bound by residues aspartate 34–glutamate 36 and arginine 93–glutamine 94. Mg(2+) is bound by residues histidine 127 and aspartate 167. Lysine 190 is a catalytic residue. D-ribose 5-phosphate is bound by residues arginine 192, aspartate 216, and aspartate 220–threonine 224.

The protein belongs to the ribose-phosphate pyrophosphokinase family. Class I subfamily. As to quaternary structure, homohexamer. Requires Mg(2+) as cofactor.

The protein resides in the cytoplasm. The catalysed reaction is D-ribose 5-phosphate + ATP = 5-phospho-alpha-D-ribose 1-diphosphate + AMP + H(+). The protein operates within metabolic intermediate biosynthesis; 5-phospho-alpha-D-ribose 1-diphosphate biosynthesis; 5-phospho-alpha-D-ribose 1-diphosphate from D-ribose 5-phosphate (route I): step 1/1. Its function is as follows. Involved in the biosynthesis of the central metabolite phospho-alpha-D-ribosyl-1-pyrophosphate (PRPP) via the transfer of pyrophosphoryl group from ATP to 1-hydroxyl of ribose-5-phosphate (Rib-5-P). This is Ribose-phosphate pyrophosphokinase from Agrobacterium fabrum (strain C58 / ATCC 33970) (Agrobacterium tumefaciens (strain C58)).